The sequence spans 267 residues: 26S proteasome non-ATPase regulatory subunit 8 homolog A (267 aa).

N-acetylmethionine is present on methionine 1. The PCI domain occupies 79–251; sequence DAFERDFFQL…APCKEIPSLQ (173 aa).

Belongs to the proteasome subunit S14 family. In terms of assembly, component of the 19S regulatory particle (RP/PA700) lid subcomplex of the 26S proteasome. The 26S proteasome is composed of a core protease (CP), known as the 20S proteasome, capped at one or both ends by the 19S regulatory particle (RP/PA700). The RP/PA700 complex is composed of at least 17 different subunits in two subcomplexes, the base and the lid, which form the portions proximal and distal to the 20S proteolytic core, respectively. Interacts with PUB22 and PUB23. Binds to the translation initiation factors TIF3E1. Interacts with UCH1 and UCH2. In terms of processing, ubiquitinated by PUB22 and PUB23. In terms of tissue distribution, ubiquitous with highest expression in flowers.

Functionally, acts as a regulatory subunit of the 26S proteasome which is involved in the ATP-dependent degradation of ubiquitinated proteins. May help to control the degradation of one or more factors that repress cytokinin signaling. Plays an important role for balancing cell expansion with cell proliferation rates during shoot development. This Arabidopsis thaliana (Mouse-ear cress) protein is 26S proteasome non-ATPase regulatory subunit 8 homolog A.